Consider the following 720-residue polypeptide: Phosphoribosylformylglycinamidine synthase subunit PurL (720 aa).

Residue His34 is part of the active site. Tyr37 is a binding site for ATP. Residue Glu83 coordinates Mg(2+). Substrate contacts are provided by residues 84-87 and Arg106; that span reads SHNH. His85 (proton acceptor) is an active-site residue. Asp107 serves as a coordination point for Mg(2+). Position 231 (Gln231) interacts with substrate. Asp259 contributes to the Mg(2+) binding site. 303-305 lines the substrate pocket; the sequence is ESQ. ATP contacts are provided by Asp480 and Gly517. Asn518 serves as a coordination point for Mg(2+). Ser520 serves as a coordination point for substrate.

This sequence belongs to the FGAMS family. In terms of assembly, monomer. Part of the FGAM synthase complex composed of 1 PurL, 1 PurQ and 2 PurS subunits.

The protein localises to the cytoplasm. It carries out the reaction N(2)-formyl-N(1)-(5-phospho-beta-D-ribosyl)glycinamide + L-glutamine + ATP + H2O = 2-formamido-N(1)-(5-O-phospho-beta-D-ribosyl)acetamidine + L-glutamate + ADP + phosphate + H(+). It participates in purine metabolism; IMP biosynthesis via de novo pathway; 5-amino-1-(5-phospho-D-ribosyl)imidazole from N(2)-formyl-N(1)-(5-phospho-D-ribosyl)glycinamide: step 1/2. Its function is as follows. Part of the phosphoribosylformylglycinamidine synthase complex involved in the purines biosynthetic pathway. Catalyzes the ATP-dependent conversion of formylglycinamide ribonucleotide (FGAR) and glutamine to yield formylglycinamidine ribonucleotide (FGAM) and glutamate. The FGAM synthase complex is composed of three subunits. PurQ produces an ammonia molecule by converting glutamine to glutamate. PurL transfers the ammonia molecule to FGAR to form FGAM in an ATP-dependent manner. PurS interacts with PurQ and PurL and is thought to assist in the transfer of the ammonia molecule from PurQ to PurL. The chain is Phosphoribosylformylglycinamidine synthase subunit PurL from Haloarcula marismortui (strain ATCC 43049 / DSM 3752 / JCM 8966 / VKM B-1809) (Halobacterium marismortui).